Reading from the N-terminus, the 677-residue chain is Methionine--tRNA ligase (677 aa).

Positions 15-25 match the 'HIGH' region motif; sequence PYANGSIHLGH. The Zn(2+) site is built by Cys-146, Cys-149, Cys-159, and Cys-162. Residues 333–337 carry the 'KMSKS' region motif; that stretch reads KMSKS. An ATP-binding site is contributed by Lys-336. The region spanning 575–677 is the tRNA-binding domain; the sequence is DFAKVDLRVA…AGAKPGHQVK (103 aa).

The protein belongs to the class-I aminoacyl-tRNA synthetase family. MetG type 1 subfamily. Homodimer. The cofactor is Zn(2+).

The protein resides in the cytoplasm. It catalyses the reaction tRNA(Met) + L-methionine + ATP = L-methionyl-tRNA(Met) + AMP + diphosphate. Is required not only for elongation of protein synthesis but also for the initiation of all mRNA translation through initiator tRNA(fMet) aminoacylation. In Escherichia coli O6:K15:H31 (strain 536 / UPEC), this protein is Methionine--tRNA ligase.